We begin with the raw amino-acid sequence, 358 residues long: Gibberellin receptor GID1B (358 aa).

A2 carries the N-acetylalanine modification. The Involved in the stabilization of the negatively charged intermediate by the formation of the oxyanion hole motif lies at 113–115 (HGG). Gibberellin A4 contacts are provided by residues 115 to 116 (GS), Y127, and S191. Positions 116, 127, 191, and 238 each coordinate gibberellin A3. S191 is a catalytic residue. D289 is a catalytic residue. Position 320 (G320) interacts with gibberellin A4. G320 is a binding site for gibberellin A3.

It belongs to the 'GDXG' lipolytic enzyme family. In terms of assembly, interacts with the DELLA proteins GAI, RGA, RGL1, RGL2 and RGL3 in a GA-dependent manner. In terms of tissue distribution, widely expressed.

Its subcellular location is the nucleus. Functions as a soluble gibberellin (GA) receptor. GA is an essential hormone that regulates growth and development in plants. Binds with high affinity the biologically active gibberellin GA4, but has no affinity for the biologically inactive GAs. In response to GA, interacts with specific DELLA proteins, known as repressors of GA-induced growth, and targets them for degradation via proteasome. Seems to be required for GA signaling that controls root growth, seed germination and flower development. May function as a dominant GA receptor at low GA concentrations in germination. Partially redundant with GID1A and GID1C. In Arabidopsis thaliana (Mouse-ear cress), this protein is Gibberellin receptor GID1B (GID1B).